Reading from the N-terminus, the 567-residue chain is Vacuolar fusion protein MON1 homolog (567 aa).

2 disordered regions span residues Met-1 to Gly-52 and Thr-65 to Ser-129. The segment covering Thr-7–Pro-19 has biased composition (pro residues). Positions Asp-43 to Gly-52 are enriched in acidic residues.

This sequence belongs to the MON1/SAND family. In terms of assembly, interacts with CCZ1A, CCZ1B and RABF2B.

Its subcellular location is the endosome. The protein localises to the prevacuolar compartment. Functionally, plays an important role in membrane trafficking through the secretory apparatus. In complex with CCZ1, acts as a guanine exchange factor (GEF) for Rab7 protein family. Promotes the exchange of GDP to GTP, converting it from an inactive GDP-bound form into an active GTP-bound form. The active form is involved in protein trafficking from prevacuolar compartments (PVCs) to vacuoles. May serve as a linker between Rab5 and Rab7 protein families in PVCs and mediate PVC maturation. The sequence is that of Vacuolar fusion protein MON1 homolog from Oryza sativa subsp. japonica (Rice).